Consider the following 308-residue polypeptide: Putative hydrolase MT0526 (308 aa).

Residues 1–48 (MMVSSHLGSPDQAGHVDLASPADPPPPDASASHSPVDMPAPVAAAGSD) are disordered. The active-site Nucleophile is the D62. Mg(2+) is bound by residues D62, D64, and D237. D64 functions as the Proton donor in the catalytic mechanism.

This sequence belongs to the HAD-like hydrolase superfamily. SerB family. Mg(2+) serves as cofactor.

This Mycobacterium tuberculosis (strain CDC 1551 / Oshkosh) protein is Putative hydrolase MT0526.